The sequence spans 287 residues: Maleylpyruvate hydrolase (287 aa).

The a divalent metal cation site is built by E143, E145, and D174.

This sequence belongs to the FAH family. Homodimer.

The catalysed reaction is 3-maleylpyruvate + H2O = maleate + pyruvate + H(+). With respect to regulation, activated by Mn(2+). Inhibited by Ni(2+), Cd(2+), Co(2+) or Cu(2+). Involved in the degradation of gentisate. Catalyzes the hydrolysis of 3-maleylpyruvate, the ring-cleavage product of gentisate. This Aquipseudomonas alcaligenes (Pseudomonas alcaligenes) protein is Maleylpyruvate hydrolase.